Here is a 300-residue protein sequence, read N- to C-terminus: Actin-related protein 2/3 complex subunit 2-A (300 aa).

Belongs to the ARPC2 family. As to quaternary structure, component of the Arp2/3 complex composed of actr2/arp2, actr3/arp3, arpc1 (arpc1a or arpc1b), arpc2, arpc3, arpc4 and arpc5.

The protein localises to the cytoplasm. It localises to the cytoskeleton. Its subcellular location is the cell projection. It is found in the nucleus. In terms of biological role, actin-binding component of the Arp2/3 complex, a multiprotein complex that mediates actin polymerization upon stimulation by nucleation-promoting factor (NPF). The Arp2/3 complex mediates the formation of branched actin networks in the cytoplasm, providing the force for cell motility. In addition to its role in the cytoplasmic cytoskeleton, the Arp2/3 complex also promotes actin polymerization in the nucleus, thereby regulating gene transcription and repair of damaged DNA. The Arp2/3 complex promotes homologous recombination (HR) repair in response to DNA damage by promoting nuclear actin polymerization, leading to drive motility of double-strand breaks (DSBs). This chain is Actin-related protein 2/3 complex subunit 2-A (arpc2-a), found in Xenopus laevis (African clawed frog).